The chain runs to 301 residues: MLPSIAKHAALHQVNPLKKHGQNFIFDSSLCDKIVRASNLAENSRVLEIGPGTGGLTRSILQKNPESLTVIETDERCLPLLNEIKEYYPNLNIIKQDALKINLTDLSCDIVNSVGFAYKKREAKPITNRRANDIGESKAIDYKVTIISNLPYHIGTELVIRWLKEARLITSMTLMLQKEVVERICAIPSTKAYGRLSVICQLIAKVEKCFDVAPTAFYPPPKVYSAIVKLIPLENPLSIALINKVEQITKLAFAGRRKMIKSSLKNLVPNIHEVLTQLKINDNYRAENLAPQDYLRIAEIL.

S-adenosyl-L-methionine is bound by residues Asn-23, Ile-25, Gly-50, Glu-72, Asp-97, and Asn-149.

The protein belongs to the class I-like SAM-binding methyltransferase superfamily. rRNA adenine N(6)-methyltransferase family. RsmA subfamily.

Its subcellular location is the cytoplasm. It catalyses the reaction adenosine(1518)/adenosine(1519) in 16S rRNA + 4 S-adenosyl-L-methionine = N(6)-dimethyladenosine(1518)/N(6)-dimethyladenosine(1519) in 16S rRNA + 4 S-adenosyl-L-homocysteine + 4 H(+). Specifically dimethylates two adjacent adenosines (A1518 and A1519) in the loop of a conserved hairpin near the 3'-end of 16S rRNA in the 30S particle. May play a critical role in biogenesis of 30S subunits. The sequence is that of Ribosomal RNA small subunit methyltransferase A from Rickettsia peacockii (strain Rustic).